A 351-amino-acid polypeptide reads, in one-letter code: Dihydroorotate dehydrogenase (quinone) (351 aa).

FMN contacts are provided by residues 67–71 and T91; that span reads AGFDK. K71 contributes to the substrate binding site. Residue 116–120 participates in substrate binding; the sequence is NAMGF. Residues N145 and N178 each coordinate FMN. N178 provides a ligand contact to substrate. The active-site Nucleophile is S181. Substrate is bound at residue N183. Residues K214 and T242 each coordinate FMN. 243 to 244 is a binding site for substrate; the sequence is NT. FMN-binding positions include G262, G291, and 312–313; that span reads YS.

This sequence belongs to the dihydroorotate dehydrogenase family. Type 2 subfamily. In terms of assembly, monomer. FMN is required as a cofactor.

The protein resides in the cell membrane. The catalysed reaction is (S)-dihydroorotate + a quinone = orotate + a quinol. The protein operates within pyrimidine metabolism; UMP biosynthesis via de novo pathway; orotate from (S)-dihydroorotate (quinone route): step 1/1. Catalyzes the conversion of dihydroorotate to orotate with quinone as electron acceptor. This is Dihydroorotate dehydrogenase (quinone) from Helicobacter acinonychis (strain Sheeba).